A 296-amino-acid chain; its full sequence is 4-hydroxy-tetrahydrodipicolinate synthase (296 aa).

Thr-49 provides a ligand contact to pyruvate. Tyr-137 serves as the catalytic Proton donor/acceptor. Lys-166 functions as the Schiff-base intermediate with substrate in the catalytic mechanism. Pyruvate is bound at residue Ile-208.

This sequence belongs to the DapA family. Homotetramer; dimer of dimers.

Its subcellular location is the cytoplasm. The catalysed reaction is L-aspartate 4-semialdehyde + pyruvate = (2S,4S)-4-hydroxy-2,3,4,5-tetrahydrodipicolinate + H2O + H(+). It participates in amino-acid biosynthesis; L-lysine biosynthesis via DAP pathway; (S)-tetrahydrodipicolinate from L-aspartate: step 3/4. Its function is as follows. Catalyzes the condensation of (S)-aspartate-beta-semialdehyde [(S)-ASA] and pyruvate to 4-hydroxy-tetrahydrodipicolinate (HTPA). This chain is 4-hydroxy-tetrahydrodipicolinate synthase, found in Chlorobium limicola (strain DSM 245 / NBRC 103803 / 6330).